A 422-amino-acid chain; its full sequence is Platelet-activating factor acetylhydrolase (422 aa).

The first 21 residues, 1–21, serve as a signal peptide directing secretion; the sequence is MASLWVRARRVFMKSRASGFS. Ser-266 (nucleophile) is an active-site residue. Asp-289 functions as the Charge relay system in the catalytic mechanism. N-linked (GlcNAc...) asparagine glycosylation occurs at Asn-331. His-345 acts as the Charge relay system in catalysis.

It belongs to the AB hydrolase superfamily. Lipase family. Plasma.

The protein localises to the secreted. Its subcellular location is the extracellular space. It catalyses the reaction a 1-O-alkyl-2-acetyl-sn-glycero-3-phosphocholine + H2O = a 1-O-alkyl-sn-glycero-3-phosphocholine + acetate + H(+). Functionally, modulates the action of platelet-activating factor (PAF) by hydrolyzing the sn-2 ester bond to yield the biologically inactive lyso-PAF. Has a specificity for substrates with a short residue at the sn-2 position. It is inactive against long-chain phospholipids. The chain is Platelet-activating factor acetylhydrolase (PLA2G7) from Gallus gallus (Chicken).